Reading from the N-terminus, the 185-residue chain is Ribosome-recycling factor (185 aa).

This sequence belongs to the RRF family.

The protein localises to the cytoplasm. Functionally, responsible for the release of ribosomes from messenger RNA at the termination of protein biosynthesis. May increase the efficiency of translation by recycling ribosomes from one round of translation to another. This Bacillus licheniformis (strain ATCC 14580 / DSM 13 / JCM 2505 / CCUG 7422 / NBRC 12200 / NCIMB 9375 / NCTC 10341 / NRRL NRS-1264 / Gibson 46) protein is Ribosome-recycling factor.